Reading from the N-terminus, the 305-residue chain is DNA-directed RNA polymerase 35 kDa subunit (305 aa).

It belongs to the poxviridae DNA-directed RNA polymerase 35 kDa subunit family. As to quaternary structure, the DNA-dependent RNA polymerase used for intermediate and late genes expression consists of eight subunits 147 kDa, 133 kDa, 35 kDa, 30 kDa, 22 kDa, 19 kDa, 18 kDa and 7 kDa totalling more than 500 kDa in mass. The same holoenzyme, with the addition of the transcription-specificity factor RAP94, is used for early gene expression.

Its subcellular location is the virion. It catalyses the reaction RNA(n) + a ribonucleoside 5'-triphosphate = RNA(n+1) + diphosphate. Functionally, part of the DNA-dependent RNA polymerase which catalyzes the transcription of viral DNA into RNA using the four ribonucleoside triphosphates as substrates. Responsible for the transcription of early, intermediate and late genes. DNA-dependent RNA polymerase associates with the early transcription factor (ETF), itself composed of D6 and A7, thereby allowing the early genes transcription. Late transcription, and probably also intermediate transcription, require newly synthesized RNA polymerase. This is DNA-directed RNA polymerase 35 kDa subunit (OPG156) from Cynomys gunnisoni (Gunnison's prairie dog).